The sequence spans 593 residues: Probable E3 ubiquitin-protein ligase ARI2 (593 aa).

A TRIAD supradomain region spans residues 120–334 (SMMSCDICVE…ISGHSCGRFQ (215 aa)). 18 residues coordinate Zn(2+): Cys-124, Cys-127, Cys-141, His-143, Cys-146, Cys-149, Cys-168, Cys-173, Cys-215, Cys-221, Cys-237, Cys-239, Cys-244, Cys-247, His-252, Cys-257, Cys-284, and Cys-287. Residues 124-173 (CDICVEDVPGYQLTRMDCGHSFCNNCWTGHFTVKINEGQSKRIICMAHKC) form an RING-type 1 zinc finger. The segment at 195 to 257 (EKFDRFLLES…SSQAHSPCSC (63 aa)) adopts an IBR-type zinc-finger fold. The segment at 284–312 (CPKCHKPVEKNGGCNLVTCLCRQSFCWLC) adopts an RING-type 2; atypical zinc-finger fold. Cys-297 is an active-site residue. 6 residues coordinate Zn(2+): Cys-302, Cys-304, Cys-309, Cys-312, His-320, and Cys-330.

It belongs to the RBR family. Ariadne subfamily. Zn(2+) serves as cofactor. In terms of tissue distribution, ubiquitous.

It carries out the reaction [E2 ubiquitin-conjugating enzyme]-S-ubiquitinyl-L-cysteine + [acceptor protein]-L-lysine = [E2 ubiquitin-conjugating enzyme]-L-cysteine + [acceptor protein]-N(6)-ubiquitinyl-L-lysine.. The protein operates within protein modification; protein ubiquitination. In terms of biological role, might act as an E3 ubiquitin-protein ligase, or as part of E3 complex, which accepts ubiquitin from specific E2 ubiquitin-conjugating enzymes and then transfers it to substrates. The polypeptide is Probable E3 ubiquitin-protein ligase ARI2 (ARI2) (Arabidopsis thaliana (Mouse-ear cress)).